Reading from the N-terminus, the 454-residue chain is CBL-interacting protein kinase 4 (454 aa).

Residues tyrosine 25 to phenylalanine 284 form the Protein kinase domain. ATP-binding positions include leucine 31–valine 39 and lysine 54. The Proton acceptor role is filled by aspartate 151. The tract at residues aspartate 169–glutamate 198 is activation loop. Residues alanine 311–glycine 335 form the NAF domain. The interval leucine 341 to valine 370 is PPI.

Belongs to the protein kinase superfamily. CAMK Ser/Thr protein kinase family. SNF1 subfamily. It depends on Mn(2+) as a cofactor.

The catalysed reaction is L-seryl-[protein] + ATP = O-phospho-L-seryl-[protein] + ADP + H(+). The enzyme catalyses L-threonyl-[protein] + ATP = O-phospho-L-threonyl-[protein] + ADP + H(+). In terms of biological role, CIPK serine-threonine protein kinases interact with CBL proteins. Binding of a CBL protein to the regulatory NAF domain of CIPK protein lead to the activation of the kinase in a calcium-dependent manner. This Oryza sativa subsp. japonica (Rice) protein is CBL-interacting protein kinase 4 (CIPK4).